A 371-amino-acid chain; its full sequence is Cytochrome b (371 aa).

The next 8 membrane-spanning stretches (helical) occupy residues 25-45, 69-90, 105-125, 170-190, 218-238, 280-300, 312-332, and 339-358; these read FGSMLLACSSMQVLTGFFLAV, WMMQNLHAIGASMFFICIYIHI, WLSGTTLLIMLMVTAFFGXXX, XXXXXXXXXXXXXXXXXXXXX, YKDLLMLSLMVLMLLMTVSFL, LGGALALAMSIMILLTVPFTH, IMQLMFWTLVATFMVITWAAT, and FTMISQIASTIYFLFFIMNP. Positions 75 and 89 each coordinate heme b. Positions 174 and 188 each coordinate heme b.

It belongs to the cytochrome b family. As to quaternary structure, the cytochrome bc1 complex contains 3 respiratory subunits (MT-CYB, CYC1 and UQCRFS1), 2 core proteins (UQCRC1 and UQCRC2) and probably 6 low-molecular weight proteins. Heme b serves as cofactor.

The protein resides in the mitochondrion inner membrane. Component of the ubiquinol-cytochrome c reductase complex (complex III or cytochrome b-c1 complex) that is part of the mitochondrial respiratory chain. The b-c1 complex mediates electron transfer from ubiquinol to cytochrome c. Contributes to the generation of a proton gradient across the mitochondrial membrane that is then used for ATP synthesis. The chain is Cytochrome b (MT-CYB) from Eryx tataricus (Tartar sand boa).